The primary structure comprises 472 residues: Na(+)/H(+) antiporter NhaA 1 (472 aa).

11 helical membrane passes run 34–54 (TASI…NSQW), 86–106 (GLMV…CLVG), 116–136 (LVIA…AGVA), 146–166 (GWGI…ALLG), 175–195 (VTLS…IGLF), 203–223 (TSLM…VLGF), 227–247 (IFYL…GVHA), 324–344 (PVSL…ALPD), 353–373 (VVFI…ISVF), 394–414 (VFAL…IASL), and 428–448 (LGIL…FLMI).

The protein belongs to the NhaA Na(+)/H(+) (TC 2.A.33) antiporter family.

Its subcellular location is the cell inner membrane. It catalyses the reaction Na(+)(in) + 2 H(+)(out) = Na(+)(out) + 2 H(+)(in). Na(+)/H(+) antiporter that extrudes sodium in exchange for external protons. The chain is Na(+)/H(+) antiporter NhaA 1 from Pseudoalteromonas atlantica (strain T6c / ATCC BAA-1087).